Reading from the N-terminus, the 795-residue chain is Delta-1-pyrroline-5-carboxylate synthase (795 aa).

Positions 1 to 361 (MLRHMHRSGV…FFSEVKPAGP (361 aa)) are glutamate 5-kinase. Positions 117, 223, and 246 each coordinate substrate. Residues 266 to 267 (SD) and 305 to 311 (LGGMEAK) each bind ATP. N6-succinyllysine occurs at positions 311, 347, and 550. A gamma-glutamyl phosphate reductase region spans residues 362-795 (TVEQQGEMAR…NLPVPQRNFS (434 aa)).

It in the N-terminal section; belongs to the glutamate 5-kinase family. This sequence in the C-terminal section; belongs to the gamma-glutamyl phosphate reductase family. Can form homodimers/multimers.

It is found in the mitochondrion matrix. The catalysed reaction is L-glutamate + ATP = L-glutamyl 5-phosphate + ADP. The enzyme catalyses L-glutamate 5-semialdehyde + phosphate + NADP(+) = L-glutamyl 5-phosphate + NADPH + H(+). The protein operates within amino-acid biosynthesis; L-proline biosynthesis; L-glutamate 5-semialdehyde from L-glutamate: step 1/2. Its pathway is amino-acid biosynthesis; L-proline biosynthesis; L-glutamate 5-semialdehyde from L-glutamate: step 2/2. Its activity is regulated as follows. Isoform Short: Inhibited by L-ornithine with a Ki of approximately 0.25 mm. Isoform Long: Insensitive to ornithine inhibition. Thus, the two amino acid insert in the long isoform abolishes feedback inhibition of P5CS activity by L-ornithine. Bifunctional enzyme that converts glutamate to glutamate 5-semialdehyde, an intermediate in the biosynthesis of proline, ornithine and arginine. This is Delta-1-pyrroline-5-carboxylate synthase (Aldh18a1) from Mus musculus (Mouse).